A 130-amino-acid polypeptide reads, in one-letter code: Small ribosomal subunit protein uS11 (130 aa).

This sequence belongs to the universal ribosomal protein uS11 family. As to quaternary structure, part of the 30S ribosomal subunit. Interacts with proteins S7 and S18. Binds to IF-3.

Its function is as follows. Located on the platform of the 30S subunit, it bridges several disparate RNA helices of the 16S rRNA. Forms part of the Shine-Dalgarno cleft in the 70S ribosome. The sequence is that of Small ribosomal subunit protein uS11 from Buchnera aphidicola subsp. Schizaphis graminum (strain Sg).